A 275-amino-acid polypeptide reads, in one-letter code: UBX domain-containing protein 8 (275 aa).

Residue Met-1 is a topological domain, cytoplasmic. A helical membrane pass occupies residues Ala-2 to Leu-22. The Lumenal segment spans residues Arg-23 to Asp-33. A helical transmembrane segment spans residues Leu-34–Val-54. Topologically, residues Thr-55–Ser-275 are cytoplasmic. The disordered stretch occupies residues Asp-137–Glu-181. Residues Thr-192–Val-268 form the UBX domain.

As to quaternary structure, interacts with SYVN1 and VCP.

The protein resides in the endoplasmic reticulum membrane. Functionally, involved in endoplasmic reticulum-associated degradation (ERAD) for misfolded lumenal proteins, possibly by tethering VCP to the endoplasmic reticulum membrane. May play a role in reproduction. Its function is as follows. May play a role in reproduction. This is UBX domain-containing protein 8 (UBXN8) from Bos taurus (Bovine).